The following is a 451-amino-acid chain: Glycine--tRNA ligase (451 aa).

Substrate-binding residues include Arg94 and Glu164. ATP contacts are provided by residues 196–198 (RNE), 206–211 (FRTREF), 281–282 (EL), and 325–328 (GVER). Position 211–215 (211–215 (FEQME)) interacts with substrate. 321 to 325 (EPSVG) is a binding site for substrate.

The protein belongs to the class-II aminoacyl-tRNA synthetase family. As to quaternary structure, homodimer.

It localises to the cytoplasm. It catalyses the reaction tRNA(Gly) + glycine + ATP = glycyl-tRNA(Gly) + AMP + diphosphate. Its function is as follows. Catalyzes the attachment of glycine to tRNA(Gly). In Mesoplasma florum (strain ATCC 33453 / NBRC 100688 / NCTC 11704 / L1) (Acholeplasma florum), this protein is Glycine--tRNA ligase.